The sequence spans 496 residues: Membrane-bound lytic murein transglycosylase F (496 aa).

Residues methionine 1–cysteine 31 form the signal peptide. Positions aspartate 32–valine 271 are non-LT domain. The tract at residues asparagine 273–arginine 496 is LT domain. Residue glutamate 316 is part of the active site. The segment at histidine 464–valine 485 is disordered.

In the N-terminal section; belongs to the bacterial solute-binding protein 3 family. The protein in the C-terminal section; belongs to the transglycosylase Slt family.

It is found in the cell outer membrane. The enzyme catalyses Exolytic cleavage of the (1-&gt;4)-beta-glycosidic linkage between N-acetylmuramic acid (MurNAc) and N-acetylglucosamine (GlcNAc) residues in peptidoglycan, from either the reducing or the non-reducing ends of the peptidoglycan chains, with concomitant formation of a 1,6-anhydrobond in the MurNAc residue.. Functionally, murein-degrading enzyme that degrades murein glycan strands and insoluble, high-molecular weight murein sacculi, with the concomitant formation of a 1,6-anhydromuramoyl product. Lytic transglycosylases (LTs) play an integral role in the metabolism of the peptidoglycan (PG) sacculus. Their lytic action creates space within the PG sacculus to allow for its expansion as well as for the insertion of various structures such as secretion systems and flagella. This is Membrane-bound lytic murein transglycosylase F from Aeromonas salmonicida (strain A449).